Consider the following 363-residue polypeptide: Chorismate synthase (363 aa).

The disordered stretch occupies residues 44–63 (DLDRRKPGTSRHTTQRQEPD). NADP(+)-binding residues include R48 and R54. FMN contacts are provided by residues 125–127 (RSS), 237–238 (NA), G277, 292–296 (KATSS), and R318.

This sequence belongs to the chorismate synthase family. In terms of assembly, homotetramer. The cofactor is FMNH2.

The catalysed reaction is 5-O-(1-carboxyvinyl)-3-phosphoshikimate = chorismate + phosphate. The protein operates within metabolic intermediate biosynthesis; chorismate biosynthesis; chorismate from D-erythrose 4-phosphate and phosphoenolpyruvate: step 7/7. Functionally, catalyzes the anti-1,4-elimination of the C-3 phosphate and the C-6 proR hydrogen from 5-enolpyruvylshikimate-3-phosphate (EPSP) to yield chorismate, which is the branch point compound that serves as the starting substrate for the three terminal pathways of aromatic amino acid biosynthesis. This reaction introduces a second double bond into the aromatic ring system. In Pseudomonas fluorescens (strain SBW25), this protein is Chorismate synthase.